We begin with the raw amino-acid sequence, 365 residues long: 5-hydroxytryptamine receptor 1E (365 aa).

At 1–21 (MNITNCTTEASMAIRPKTITE) the chain is on the extracellular side. 2 N-linked (GlcNAc...) asparagine glycosylation sites follow: N2 and N5. A helical membrane pass occupies residues 22–45 (KMLICMTLVVITTLTTLLNLAVIM). Residues 46–59 (AIGTTKKLHQPANY) lie on the Cytoplasmic side of the membrane. A helical membrane pass occupies residues 60–84 (LICSLAVTDLLVAVLVMPLSIIYIV). Over 85–92 (MDRWKLGY) the chain is Extracellular. The helical transmembrane segment at 93–118 (FLCEVWLSVDMTCCTCSILHLCVIAL) threads the bilayer. A disulfide bridge links C95 with C173. Serotonin-binding residues include D102 and C106. The DRY motif; important for ligand-induced conformation changes motif lies at 119-121 (DRY). Topologically, residues 119-138 (DRYWAITNAIEYARKRTAKR) are cytoplasmic. A helical membrane pass occupies residues 139–157 (AALMILTVWTISIFISMPP). Over 158 to 179 (LFWRSHRRLSPPPSQCTIQHDH) the chain is Extracellular. Residues 180-203 (VIYTIYSTLGAFYIPLTLILILYY) traverse the membrane as a helical segment. Topologically, residues 204 to 291 (RIYHAAKSLY…SSTRERKAAR (88 aa)) are cytoplasmic. The chain crosses the membrane as a helical span at residues 292-316 (ILGLILGAFILSWLPFFIKELIVGL). The Extracellular segment spans residues 317-322 (SIYTVS). The chain crosses the membrane as a helical span at residues 323–345 (SEVADFLTWLGYVNSLINPLLYT). Positions 340 to 344 (NPLLY) match the NPxxY motif; important for ligand-induced conformation changes and signaling motif. At 346 to 365 (SFNEDFKLAFKKLIRCREHT) the chain is on the cytoplasmic side.

The protein belongs to the G-protein coupled receptor 1 family. As to expression, detected in brain.

The protein localises to the cell membrane. In terms of biological role, G-protein coupled receptor for 5-hydroxytryptamine (serotonin). Also functions as a receptor for various alkaloids and psychoactive substances. Ligand binding causes a conformation change that triggers signaling via guanine nucleotide-binding proteins (G proteins) and modulates the activity of downstream effectors, such as adenylate cyclase. HTR1E is coupled to G(i)/G(o) G alpha proteins and mediates inhibitory neurotransmission by inhibiting adenylate cyclase activity. The protein is 5-hydroxytryptamine receptor 1E of Homo sapiens (Human).